A 272-amino-acid chain; its full sequence is Shikimate dehydrogenase (NADP(+)) (272 aa).

Residues 14–16 (SKS) and Thr61 each bind shikimate. Lys65 serves as the catalytic Proton acceptor. Residue Glu77 participates in NADP(+) binding. Shikimate is bound by residues Asn86 and Asp102. NADP(+)-binding positions include 126–130 (GAGGA), 149–154 (NRTYSR), and Met213. Tyr215 provides a ligand contact to shikimate. Position 237 (Gly237) interacts with NADP(+).

This sequence belongs to the shikimate dehydrogenase family. As to quaternary structure, homodimer.

It carries out the reaction shikimate + NADP(+) = 3-dehydroshikimate + NADPH + H(+). Its pathway is metabolic intermediate biosynthesis; chorismate biosynthesis; chorismate from D-erythrose 4-phosphate and phosphoenolpyruvate: step 4/7. Its function is as follows. Involved in the biosynthesis of the chorismate, which leads to the biosynthesis of aromatic amino acids. Catalyzes the reversible NADPH linked reduction of 3-dehydroshikimate (DHSA) to yield shikimate (SA). This is Shikimate dehydrogenase (NADP(+)) from Enterobacter sp. (strain 638).